We begin with the raw amino-acid sequence, 166 residues long: Probable DHNTP pyrophosphohydrolase (166 aa).

Positions 42 to 166 (DLQLSASALV…FKKYYRYKNI (125 aa)) constitute a Nudix hydrolase domain. A Nudix box motif is present at residues 73–94 (GHVELKESPLDTAIREFHEETG). The Mg(2+) site is built by Glu88 and Glu92.

The protein belongs to the Nudix hydrolase family. Monomer. It depends on Mg(2+) as a cofactor.

Its pathway is cofactor biosynthesis; tetrahydrofolate biosynthesis; 2-amino-4-hydroxy-6-hydroxymethyl-7,8-dihydropteridine diphosphate from 7,8-dihydroneopterin triphosphate: step 1/4. Probably mediates the removal of pyrophosphate from dihydroneopterin triphosphate (DHNTP), a possible step in the pterin branch of the folate synthesis pathway. The sequence is that of Probable DHNTP pyrophosphohydrolase (folQ) from Lactococcus lactis subsp. cremoris (strain MG1363).